The primary structure comprises 276 residues: Non-heme chloroperoxidase (276 aa).

In terms of domain architecture, AB hydrolase-1 spans 24–254 (PVVFHHGWPL…NATLKSYEGL (231 aa)). Catalysis depends on residues S97, D227, and H256.

It belongs to the AB hydrolase superfamily. Bacterial non-heme haloperoxidase / perhydrolase family. Homodimer.

The protein is Non-heme chloroperoxidase (cpo) of Streptomyces lividans.